A 510-amino-acid polypeptide reads, in one-letter code: Protein ERGIC-53 (510 aa).

An N-terminal signal peptide occupies residues 1 to 30 (MAGSRQRGLRARVRPLFCALLLSLGRFVRG). Over 31 to 477 (DGVGGDPAVA…ELPPFPSCLS (447 aa)) the chain is Lumenal. In terms of domain architecture, L-type lectin-like spans 44–267 (RRFEYKYSFK…DVLSFLTFQL (224 aa)). Residues S88 and D121 each coordinate a carbohydrate. Positions 152, 154, and 156 each coordinate Ca(2+). 2 residues coordinate a carbohydrate: N156 and H178. Ca(2+) is bound at residue D181. C190 and C230 form a disulfide bridge. Position 251–253 (251–253 (GGL)) interacts with a carbohydrate. Residue S425 is modified to Phosphoserine. Residues 478-498 (TVHFIIFVVVQTVLFIGYIMY) traverse the membrane as a helical segment. Residues 499–510 (RSQQEAAAKKFF) are Cytoplasmic-facing. Residues 499–510 (RSQQEAAAKKFF) form a mediates interaction with RAB3GAP1, RAB3GAP2 and UBXN6 region. The ER export motif signature appears at 509–510 (FF).

As to quaternary structure, exists both as a covalent disulfide-linked homohexamer, and a complex of three disulfide-linked dimers non-covalently kept together. Interacts with MCFD2. May interact with TMEM115. Interacts with RAB3GAP1 and RAB3GAP2. Interacts with UBXN6. Interacts with SERPINA1/alpha1-antitrypsin. Interacts with BET1. Post-translationally, the N-terminal may be partly blocked. Ubiquitous.

Its subcellular location is the endoplasmic reticulum-Golgi intermediate compartment membrane. The protein resides in the golgi apparatus membrane. It is found in the endoplasmic reticulum membrane. Its function is as follows. Mannose-specific lectin. May recognize sugar residues of glycoproteins, glycolipids, or glycosylphosphatidyl inositol anchors and may be involved in the sorting or recycling of proteins, lipids, or both. The LMAN1-MCFD2 complex forms a specific cargo receptor for the ER-to-Golgi transport of selected proteins. The protein is Protein ERGIC-53 (LMAN1) of Homo sapiens (Human).